The sequence spans 532 residues: Small ribosomal subunit protein uS2cz (532 aa).

Residues 1–271 (METLEKNFKK…SPISSKEKKA (271 aa)) are N-terminal extension. TRAM domains are found at residues 38–97 (ALQA…SILN), 127–186 (DFKV…KPIL), and 197–260 (NQMI…KILK).

This sequence belongs to the universal ribosomal protein uS2 family.

The protein resides in the plastid. It localises to the chloroplast. The sequence is that of Small ribosomal subunit protein uS2cz (rps2-1) from Tetradesmus obliquus (Green alga).